Reading from the N-terminus, the 119-residue chain is Large ribosomal subunit protein bL20c (119 aa).

It belongs to the bacterial ribosomal protein bL20 family.

The protein localises to the plastid. It is found in the chloroplast. Its function is as follows. Binds directly to 23S ribosomal RNA and is necessary for the in vitro assembly process of the 50S ribosomal subunit. It is not involved in the protein synthesizing functions of that subunit. The polypeptide is Large ribosomal subunit protein bL20c (Oedogonium cardiacum (Filamentous green alga)).